The chain runs to 308 residues: Acetylglutamate kinase (308 aa).

Substrate contacts are provided by residues Gly73–Gly74, Arg95, and Asn194.

Belongs to the acetylglutamate kinase family. ArgB subfamily.

The protein localises to the cytoplasm. The catalysed reaction is N-acetyl-L-glutamate + ATP = N-acetyl-L-glutamyl 5-phosphate + ADP. It participates in amino-acid biosynthesis; L-arginine biosynthesis; N(2)-acetyl-L-ornithine from L-glutamate: step 2/4. Its function is as follows. Catalyzes the ATP-dependent phosphorylation of N-acetyl-L-glutamate. This Rhodococcus jostii (strain RHA1) protein is Acetylglutamate kinase.